The following is a 146-amino-acid chain: Large ribosomal subunit protein uL15 (146 aa).

Residues 1–18 (MKLHELKAAEGTRKERNR) show a composition bias toward basic and acidic residues. The disordered stretch occupies residues 1–58 (MKLHELKAAEGTRKERNRVGRGMSSGNGKTSGRGHKGQKARSGGGVRPGFEGGQMPLF). Positions 42–52 (SGGGVRPGFEG) are enriched in gly residues.

Belongs to the universal ribosomal protein uL15 family. Part of the 50S ribosomal subunit.

Functionally, binds to the 23S rRNA. In Oceanobacillus iheyensis (strain DSM 14371 / CIP 107618 / JCM 11309 / KCTC 3954 / HTE831), this protein is Large ribosomal subunit protein uL15.